Here is a 466-residue protein sequence, read N- to C-terminus: MTYAPVKDVLSGKLAVDSEVTVRGWIRTRRDSKAGISFLAIYDGSCFDPIQAVVPNNLNNYNDEVLKLTTGCSVEVTGKIVASPAAGQAFELAATDVKVVGWVEDADTYPMAKTRHSIEYLREVAHLRPRTNVIGAVARVRHSLSQAIHRFYHEQGYYWLSAPLITASDCEGAGEMFRVSTLDLANLPRTESGDVDFNEDFFGKETFLTVSGQLNGEAYACALSKIYTFGPTFRAENSNTSRHLAEFWMVEPEVAFADLNDIAKLAEDMLKYVFAAVLEERRDDLEFFASRIDKDVINRLEQFVSSDFAQVDYTDAIQILLDSGREFEFPVEWGIDMSSEHERFLAEEHFKAPVIVKNYPKDIKAFYMRMNEDGKTVAAMDVLAPGIGEIIGGSQREERLDVLDARMVEMGIDPEHMNWYRDLRRYGTVPHAGFGLGFERLVSYVTGMGNVRDVIPFPRTPRNANF.

This sequence belongs to the class-II aminoacyl-tRNA synthetase family. Homodimer.

The protein localises to the cytoplasm. It carries out the reaction tRNA(Asn) + L-asparagine + ATP = L-asparaginyl-tRNA(Asn) + AMP + diphosphate + H(+). The protein is Asparagine--tRNA ligase of Vibrio vulnificus (strain YJ016).